The following is a 145-amino-acid chain: Large ribosomal subunit protein uL11 (145 aa).

It belongs to the universal ribosomal protein uL11 family. Part of the ribosomal stalk of the 50S ribosomal subunit. Interacts with L10 and the large rRNA to form the base of the stalk. L10 forms an elongated spine to which L12 dimers bind in a sequential fashion forming a multimeric L10(L12)X complex. Post-translationally, one or more lysine residues are methylated.

Its function is as follows. Forms part of the ribosomal stalk which helps the ribosome interact with GTP-bound translation factors. The sequence is that of Large ribosomal subunit protein uL11 from Aquifex aeolicus (strain VF5).